A 451-amino-acid chain; its full sequence is MREIISIHLGQGGIQIGNACWELYCLEHGIQPDGSMPSDKAIGVEDDAFNTFFSETGAGKHVPRAVFLDLEPSVVDEVRTGTYRQLFHPEQLISGKEDAANNYARGHYTIGKEIVDLCLDRIRKLADNCTGLQGFLAFHAVGGGTGSGLGRLLLERLSVDYGKKSKLGFTIYPSPQISTAVVEPYNSVLSTHSLLEHTDVAVMLDNEAIYDICRRNLDIERPTYTNLNRLIAQVISSLTASLRFDGALNVDITEFQTNLVPYPRIHFVLSSYAPIISAEKAYHEQLSVAEITNAAFEPASMMAKCDPRHGKYMACCLMYRGDVVPKDVNASVATIKTKRTIQFVDWCPTGFKCGINYQPPTVVPGGDLAKVQRAVCMISNSTAIAEVFARIDHKFDLMYSKRAFVHWYVGEGMEEGEFSEAREDLAALEKDYEEVGAESADVEGEEDVEEY.

Position 11 (glutamine 11) interacts with GTP. Position 40 is an N6-acetyllysine (lysine 40). Residues glutamate 71, glycine 144, threonine 145, threonine 179, asparagine 206, and asparagine 228 each coordinate GTP. Glutamate 71 contributes to the Mg(2+) binding site. The active site involves glutamate 254.

The protein belongs to the tubulin family. Dimer of alpha and beta chains. A typical microtubule is a hollow water-filled tube with an outer diameter of 25 nm and an inner diameter of 15 nM. Alpha-beta heterodimers associate head-to-tail to form protofilaments running lengthwise along the microtubule wall with the beta-tubulin subunit facing the microtubule plus end conferring a structural polarity. Microtubules usually have 13 protofilaments but different protofilament numbers can be found in some organisms and specialized cells. It depends on Mg(2+) as a cofactor. In terms of processing, undergoes a tyrosination/detyrosination cycle, the cyclic removal and re-addition of a C-terminal tyrosine residue by the enzymes tubulin tyrosine carboxypeptidase (TTCP) and tubulin tyrosine ligase (TTL), respectively. Acetylation of alpha chains at Lys-40 stabilizes microtubules and affects affinity and processivity of microtubule motors. This modification has a role in multiple cellular functions, ranging from cell motility, cell cycle progression or cell differentiation to intracellular trafficking and signaling.

Its subcellular location is the cytoplasm. The protein resides in the cytoskeleton. The catalysed reaction is GTP + H2O = GDP + phosphate + H(+). In terms of biological role, tubulin is the major constituent of microtubules, a cylinder consisting of laterally associated linear protofilaments composed of alpha- and beta-tubulin heterodimers. Microtubules grow by the addition of GTP-tubulin dimers to the microtubule end, where a stabilizing cap forms. Below the cap, tubulin dimers are in GDP-bound state, owing to GTPase activity of alpha-tubulin. In Euglena gracilis, this protein is Tubulin alpha chain (TUBA).